The chain runs to 448 residues: UDP-N-acetylmuramoylalanine--D-glutamate ligase (448 aa).

Residues Lys-17, Ser-18, Thr-38, Arg-39, and Gly-78 each coordinate UDP-N-acetyl-alpha-D-muramoyl-L-alanine. Gly-116–Thr-122 is a binding site for ATP. Residues Ala-119, Lys-120, Ser-121, and Thr-122 each coordinate ADP. UDP-N-acetyl-alpha-D-muramoyl-L-alanine contacts are provided by Asn-143 and His-188. ADP contacts are provided by Asn-278, Arg-309, Asp-324, and Lys-326.

The protein belongs to the MurCDEF family.

It is found in the cytoplasm. The enzyme catalyses UDP-N-acetyl-alpha-D-muramoyl-L-alanine + D-glutamate + ATP = UDP-N-acetyl-alpha-D-muramoyl-L-alanyl-D-glutamate + ADP + phosphate + H(+). It participates in cell wall biogenesis; peptidoglycan biosynthesis. Its function is as follows. Involved in cell wall formation. Catalyzes the addition of D-glutamate to the peptidoglycan precursor UDP-N-acetylmuramoyl-L-alanine (UMA). In Pseudomonas aeruginosa (strain ATCC 15692 / DSM 22644 / CIP 104116 / JCM 14847 / LMG 12228 / 1C / PRS 101 / PAO1), this protein is UDP-N-acetylmuramoylalanine--D-glutamate ligase.